Here is a 97-residue protein sequence, read N- to C-terminus: Co-chaperonin GroES (97 aa).

Belongs to the GroES chaperonin family. Heptamer of 7 subunits arranged in a ring. Interacts with the chaperonin GroEL.

It is found in the cytoplasm. Its function is as follows. Together with the chaperonin GroEL, plays an essential role in assisting protein folding. The GroEL-GroES system forms a nano-cage that allows encapsulation of the non-native substrate proteins and provides a physical environment optimized to promote and accelerate protein folding. GroES binds to the apical surface of the GroEL ring, thereby capping the opening of the GroEL channel. The polypeptide is Co-chaperonin GroES (Baumannia cicadellinicola subsp. Homalodisca coagulata).